Consider the following 309-residue polypeptide: Homoserine kinase (309 aa).

91–101 (PIGSGLGSSAC) provides a ligand contact to ATP.

This sequence belongs to the GHMP kinase family. Homoserine kinase subfamily.

It is found in the cytoplasm. The enzyme catalyses L-homoserine + ATP = O-phospho-L-homoserine + ADP + H(+). The protein operates within amino-acid biosynthesis; L-threonine biosynthesis; L-threonine from L-aspartate: step 4/5. Its function is as follows. Catalyzes the ATP-dependent phosphorylation of L-homoserine to L-homoserine phosphate. The chain is Homoserine kinase from Buchnera aphidicola subsp. Schizaphis graminum (strain Sg).